We begin with the raw amino-acid sequence, 333 residues long: tRNA-dihydrouridine(16) synthase (333 aa).

FMN-binding positions include 19 to 21 (PMQ) and Gln-80. The active-site Proton donor is the Cys-110. FMN is bound by residues Lys-151, 211-213 (NGD), and 235-236 (GR).

Belongs to the Dus family. DusC subfamily. FMN is required as a cofactor.

The catalysed reaction is 5,6-dihydrouridine(16) in tRNA + NADP(+) = uridine(16) in tRNA + NADPH + H(+). The enzyme catalyses 5,6-dihydrouridine(16) in tRNA + NAD(+) = uridine(16) in tRNA + NADH + H(+). Catalyzes the synthesis of 5,6-dihydrouridine (D), a modified base found in the D-loop of most tRNAs, via the reduction of the C5-C6 double bond in target uridines. Specifically modifies U16 in tRNAs. The protein is tRNA-dihydrouridine(16) synthase of Neisseria meningitidis serogroup B (strain ATCC BAA-335 / MC58).